Here is a 1358-residue protein sequence, read N- to C-terminus: Protein STU1 (1358 aa).

Disordered stretches follow at residues 915–950 (FVAD…SHGF) and 970–990 (QPET…DESN). The segment covering 926–949 (DDTKKNGSDVVDHEEIRDHEESHG) has biased composition (basic and acidic residues). Residues 973–990 (TVDENVDPMEVDSPDESN) show a composition bias toward acidic residues.

It belongs to the CLASP family. In terms of assembly, interacts with microtubules.

It localises to the cytoplasm. The protein resides in the cytoskeleton. It is found in the nucleus. Its subcellular location is the spindle. Functionally, microtubule binding protein that promotes the stabilization of dynamic microtubules. Required for mitotic spindle formation. This chain is Protein STU1 (STU1), found in Kluyveromyces lactis (strain ATCC 8585 / CBS 2359 / DSM 70799 / NBRC 1267 / NRRL Y-1140 / WM37) (Yeast).